The following is a 192-amino-acid chain: MLSFLSSNLSSTRQSLAQVLNFALVLSTAFMLWKGLSVFTASSSPIVVVLSGSMEPAFQRGDLLFLWNRSPRAELGEIVVYNVRGKDIPIVHRVVRTFPQIEGKAKKVKEVTEASSVPPNMLLTKGDNNIADDTELYAKNQDFLHREEDIVGSVRGYMPMVGYVTIMLSEHPWLKTVLLGIMGLMVILQREQ.

Topologically, residues 1-18 (MLSFLSSNLSSTRQSLAQ) are cytoplasmic. The helical; Signal-anchor for type II membrane protein transmembrane segment at 19–39 (VLNFALVLSTAFMLWKGLSVF) threads the bilayer. The Lumenal segment spans residues 40 to 192 (TASSSPIVVV…GLMVILQREQ (153 aa)). Catalysis depends on charge relay system residues serine 53, histidine 92, and aspartate 133. Residues 177–188 (VLLGIMGLMVIL) are C-terminal short (CTS) helix.

This sequence belongs to the peptidase S26B family. Component of the signal peptidase complex (SPC) composed of a catalytic subunit SEC11 and three accessory subunits SPC1, SPC2 and SPC3. The complex induces a local thinning of the ER membrane which is used to measure the length of the signal peptide (SP) h-region of protein substrates. This ensures the selectivity of the complex towards h-regions shorter than 18-20 amino acids. SPC associates with the translocon complex.

Its subcellular location is the endoplasmic reticulum membrane. It carries out the reaction Cleavage of hydrophobic, N-terminal signal or leader sequences from secreted and periplasmic proteins.. Catalytic component of the signal peptidase complex (SPC) which catalyzes the cleavage of N-terminal signal sequences from nascent proteins as they are translocated into the lumen of the endoplasmic reticulum. Specifically cleaves N-terminal signal peptides that contain a hydrophobic alpha-helix (h-region) shorter than 18-20 amino acids. In Neosartorya fischeri (strain ATCC 1020 / DSM 3700 / CBS 544.65 / FGSC A1164 / JCM 1740 / NRRL 181 / WB 181) (Aspergillus fischerianus), this protein is Signal peptidase complex catalytic subunit sec11 (sec11).